The following is a 35-amino-acid chain: Conotoxin M11.2 (35 aa).

4 disulfides stabilise this stretch: Cys-2–Cys-16, Cys-9–Cys-21, Cys-15–Cys-26, and Cys-20–Cys-33.

The protein belongs to the conotoxin I1 superfamily. As to expression, expressed by the venom duct.

Its subcellular location is the secreted. The sequence is that of Conotoxin M11.2 from Conus magus (Magical cone).